Consider the following 160-residue polypeptide: Ribosomal RNA large subunit methyltransferase H (160 aa).

Residues Leu-76 and Gly-108 each coordinate S-adenosyl-L-methionine.

The protein belongs to the RNA methyltransferase RlmH family. As to quaternary structure, homodimer.

The protein localises to the cytoplasm. It carries out the reaction pseudouridine(1915) in 23S rRNA + S-adenosyl-L-methionine = N(3)-methylpseudouridine(1915) in 23S rRNA + S-adenosyl-L-homocysteine + H(+). In terms of biological role, specifically methylates the pseudouridine at position 1915 (m3Psi1915) in 23S rRNA. The chain is Ribosomal RNA large subunit methyltransferase H from Rhodopseudomonas palustris (strain HaA2).